The sequence spans 212 residues: ER lumen protein-retaining receptor 1-B (212 aa).

At 1 to 4 the chain is on the lumenal side; that stretch reads MNIF. Residues 5-24 traverse the membrane as a helical segment; it reads RFLGDISHLSAIIILLLKIW. At 25–32 the chain is on the cytoplasmic side; sequence KSRSCAGI. The chain crosses the membrane as a helical span at residues 33–52; that stretch reads SGKSQLLFAIVFTTRYLDLF. The tract at residues 47 to 48 is interaction with the K-D-E-L motif on target proteins; sequence RY. Over 53–58 the chain is Lumenal; the sequence is TNFISF. The helical transmembrane segment at 59 to 79 threads the bilayer; it reads YNTSMKVVYVASSYATVWMIY. Topologically, residues 80 to 92 are cytoplasmic; sequence SKFKATYDGNHDT. A helical membrane pass occupies residues 93 to 110; sequence FRVEFLIVPTAILSFLVN. Over 111–116 the chain is Lumenal; that stretch reads HDFTPL. Residues 117 to 135 traverse the membrane as a helical segment; sequence EILWTFSIYLESVAILPQL. Residues 136 to 149 lie on the Cytoplasmic side of the membrane; the sequence is FMVSKTGEAETITS. Residues 150–168 traverse the membrane as a helical segment; that stretch reads HYLFALGIYRTLYLFNWIW. Residues 159 to 169 are interaction with the K-D-E-L motif on target proteins; the sequence is RTLYLFNWIWR. Residues 169–178 are Lumenal-facing; sequence RYQFEEFFDL. Residues 179–199 form a helical membrane-spanning segment; the sequence is IAIVAGLVQTVLYCDFFYLYI. At 200–212 the chain is on the cytoplasmic side; that stretch reads TKVLKGKKLSLPA. The tract at residues 204 to 207 is important for recycling of cargo proteins with the sequence motif K-D-E-L from the Golgi to the endoplasmic reticulum; the sequence is KGKK.

Belongs to the ERD2 family.

It is found in the golgi apparatus membrane. The protein localises to the cytoplasmic vesicle. It localises to the COPI-coated vesicle membrane. The protein resides in the endoplasmic reticulum membrane. Its subcellular location is the endoplasmic reticulum-Golgi intermediate compartment membrane. Functionally, receptor for the C-terminal sequence motif K-D-E-L that is present on endoplasmic reticulum resident proteins and that mediates their recycling from the Golgi back to the endoplasmic reticulum. The sequence is that of ER lumen protein-retaining receptor 1-B (kdelr1-b) from Xenopus laevis (African clawed frog).